Consider the following 203-residue polypeptide: Cytochrome c biogenesis CcmF N-terminal-like mitochondrial protein 2 (203 aa).

The next 2 helical transmembrane spans lie at 44–64 (IWILTCWWFLTVGILLGSWWA) and 143–163 (IFLWWFFLLMTGISMILFYQM).

This sequence belongs to the CcmF/CycK/Ccl1/NrfE/CcsA family. As to quaternary structure, interacts with CCMFC, CCMFN1, CCMH and CYTC-1.

It is found in the mitochondrion inner membrane. Functionally, forms a complex with CCMFC, CCMFN1 and CCMH that performs the assembly of heme with c-type apocytochromes in mitochondria. The protein is Cytochrome c biogenesis CcmF N-terminal-like mitochondrial protein 2 of Arabidopsis thaliana (Mouse-ear cress).